Here is a 510-residue protein sequence, read N- to C-terminus: GMP synthase [glutamine-hydrolyzing] (510 aa).

The Glutamine amidotransferase type-1 domain maps to 5–195; the sequence is TVVVLDFGGQ…LFEICGLRGD (191 aa). The active-site Nucleophile is the Cys-82. Active-site residues include His-169 and Glu-171. In terms of domain architecture, GMPS ATP-PPase spans 196–385; it reads WDLSDFISEA…LGIPAEILWR (190 aa). 223–229 contributes to the ATP binding site; the sequence is SGGVDSS.

As to quaternary structure, homodimer.

It carries out the reaction XMP + L-glutamine + ATP + H2O = GMP + L-glutamate + AMP + diphosphate + 2 H(+). It participates in purine metabolism; GMP biosynthesis; GMP from XMP (L-Gln route): step 1/1. In terms of biological role, catalyzes the synthesis of GMP from XMP. The polypeptide is GMP synthase [glutamine-hydrolyzing] (Syntrophomonas wolfei subsp. wolfei (strain DSM 2245B / Goettingen)).